We begin with the raw amino-acid sequence, 222 residues long: Transmembrane reductase CYB561D2 (222 aa).

The Cytoplasmic segment spans residues 2 to 17 (ALSAETESHIYRALRT). Residues 14 to 217 (ALRTASGAAA…NQVSNAYLYR (204 aa)) enclose the Cytochrome b561 domain. A helical transmembrane segment spans residues 18 to 38 (ASGAAAHLVALGFTIFVAVLA). At 39–46 (RPGSSLFS) the chain is on the lumenal side. Residues 47–67 (WHPVLMSLAFSFLMTEALLVF) form a helical membrane-spanning segment. Position 48 (histidine 48) interacts with heme b. Residues 68 to 85 (SPESSLLHSLSRKGRARC) are Cytoplasmic-facing. Histidine 86 and histidine 120 together coordinate heme b. The helical transmembrane segment at 86-106 (HWVLQLLALLCALLGLGLVIL) threads the bilayer. Over 107–122 (HKEQLGKAHLVTRHGQ) the chain is Lumenal. Residues 123 to 143 (AGLLAVLWAGLQCSGGVGLLY) form a helical membrane-spanning segment. At 144-162 (PKLLPRWPLAKLKLYHATS) the chain is on the cytoplasmic side. A heme b-binding site is contributed by histidine 159. A helical membrane pass occupies residues 163 to 183 (GLVGYLLGSASLLLGMCSLWF). Residues 184-186 (TAS) are Lumenal-facing. A helical membrane pass occupies residues 187-207 (VTGAAWYLAVLCPVLTSLVIM). Residues 208 to 222 (NQVSNAYLYRKRIQP) lie on the Cytoplasmic side of the membrane.

The cofactor is heme b.

It localises to the endoplasmic reticulum membrane. It is found in the cytoplasmic vesicle membrane. The enzyme catalyses monodehydro-L-ascorbate radical(out) + L-ascorbate(in) = monodehydro-L-ascorbate radical(in) + L-ascorbate(out). It catalyses the reaction Fe(3+)(out) + L-ascorbate(in) = monodehydro-L-ascorbate radical(in) + Fe(2+)(out) + H(+). Its function is as follows. Transmembrane reductase that may use ascorbate as an electron donor in the cytoplasm and transfer electrons across endoplasmic reticulum membranes to reduce monodehydro-L-ascorbate radical and iron cations Fe(3+) in the lumen of that compartment. This Homo sapiens (Human) protein is Transmembrane reductase CYB561D2.